A 103-amino-acid polypeptide reads, in one-letter code: Large ribosomal subunit protein uL24 (103 aa).

It belongs to the universal ribosomal protein uL24 family. As to quaternary structure, part of the 50S ribosomal subunit.

In terms of biological role, one of two assembly initiator proteins, it binds directly to the 5'-end of the 23S rRNA, where it nucleates assembly of the 50S subunit. Its function is as follows. One of the proteins that surrounds the polypeptide exit tunnel on the outside of the subunit. This chain is Large ribosomal subunit protein uL24, found in Glaesserella parasuis serovar 5 (strain SH0165) (Haemophilus parasuis).